The sequence spans 143 residues: Peptide methionine sulfoxide reductase MsrB (143 aa).

The MsrB domain occupies 16-139 (DAELRRRLTP…NSAALNFEAK (124 aa)). The Zn(2+) site is built by Cys-55, Cys-58, Cys-104, and Cys-107. The Nucleophile role is filled by Cys-128.

The protein belongs to the MsrB Met sulfoxide reductase family. Zn(2+) serves as cofactor.

The enzyme catalyses L-methionyl-[protein] + [thioredoxin]-disulfide + H2O = L-methionyl-(R)-S-oxide-[protein] + [thioredoxin]-dithiol. This is Peptide methionine sulfoxide reductase MsrB from Burkholderia pseudomallei (strain 1710b).